The following is a 321-amino-acid chain: Gibberellin 2-beta-dioxygenase 4 (321 aa).

Residues 156-269 (DSDSVLRVNH…RLSTAYFAGP (114 aa)) form the Fe2OG dioxygenase domain. The Fe cation site is built by His193, Asp195, and His250. The active site involves Arg260.

It belongs to the iron/ascorbate-dependent oxidoreductase family. GA2OX subfamily. Requires Fe(2+) as cofactor. As to expression, expressed at the base of the shoot apical meristem and developing leaf primordia.

The enzyme catalyses gibberellin A1 + 2-oxoglutarate + O2 = gibberellin A8 + succinate + CO2. The protein operates within plant hormone biosynthesis; gibberellin biosynthesis. Functionally, catalyzes the 2-beta-hydroxylation of several biologically active gibberellins, leading to the homeostatic regulation of their endogenous level. Catabolism of gibberellins (GAs) plays a central role in plant development. Converts GA9/GA20 to GA51/GA29 and GA4/GA1 to GA34/GA8. The polypeptide is Gibberellin 2-beta-dioxygenase 4 (GA2OX4) (Arabidopsis thaliana (Mouse-ear cress)).